Here is a 250-residue protein sequence, read N- to C-terminus: Urease accessory protein UreG 3 (250 aa).

The tract at residues 1-24 (MPDNASAQQPGQPAQGPNEHYHQP) is disordered. Low complexity predominate over residues 7–17 (AQQPGQPAQGP). 37–44 (GPVGTGKS) contributes to the GTP binding site. Residues 230 to 250 (GTHVPTDPGPMAPHSHSHDGS) are disordered.

It belongs to the SIMIBI class G3E GTPase family. UreG subfamily. Homodimer. UreD, UreF and UreG form a complex that acts as a GTP-hydrolysis-dependent molecular chaperone, activating the urease apoprotein by helping to assemble the nickel containing metallocenter of UreC. The UreE protein probably delivers the nickel.

It localises to the cytoplasm. Functionally, facilitates the functional incorporation of the urease nickel metallocenter. This process requires GTP hydrolysis, probably effectuated by UreG. In Streptomyces griseus subsp. griseus (strain JCM 4626 / CBS 651.72 / NBRC 13350 / KCC S-0626 / ISP 5235), this protein is Urease accessory protein UreG 3.